The following is a 215-amino-acid chain: Orotate phosphoribosyltransferase (215 aa).

A 5-phospho-alpha-D-ribose 1-diphosphate-binding site is contributed by Lys26. 34–35 provides a ligand contact to orotate; the sequence is FF. 5-phospho-alpha-D-ribose 1-diphosphate contacts are provided by residues 72 to 73, Arg99, Lys100, Lys103, His105, and 124 to 132; these read YK and DDVITAGTA. 2 residues coordinate orotate: Thr128 and Arg156.

The protein belongs to the purine/pyrimidine phosphoribosyltransferase family. PyrE subfamily. In terms of assembly, homodimer. Requires Mg(2+) as cofactor.

It carries out the reaction orotidine 5'-phosphate + diphosphate = orotate + 5-phospho-alpha-D-ribose 1-diphosphate. It functions in the pathway pyrimidine metabolism; UMP biosynthesis via de novo pathway; UMP from orotate: step 1/2. Its function is as follows. Catalyzes the transfer of a ribosyl phosphate group from 5-phosphoribose 1-diphosphate to orotate, leading to the formation of orotidine monophosphate (OMP). In Cellvibrio japonicus (strain Ueda107) (Pseudomonas fluorescens subsp. cellulosa), this protein is Orotate phosphoribosyltransferase.